A 462-amino-acid polypeptide reads, in one-letter code: Lysophospholipid acyltransferase 1 (462 aa).

The next 9 membrane-spanning stretches (helical) occupy residues 9–29 (SIGV…TIPV), 52–72 (FLSY…PMTI), 84–104 (CGII…VFYM), 158–178 (SLIE…GPVY), 211–231 (AILQ…QYPL), 263–283 (YFIW…FSGW), 353–373 (AVWH…ALMI), 396–416 (IMVF…AVGF), and 431–451 (VYYI…VVPA). Residue histidine 356 is part of the active site.

It belongs to the membrane-bound acyltransferase family. Expressed in roots, rosette leaves, petals, stigma, chalazal endosperm of developing seeds and vascular bundles of siliques.

Its subcellular location is the endoplasmic reticulum membrane. It catalyses the reaction a 1-acyl-sn-glycero-3-phosphocholine + an acyl-CoA = a 1,2-diacyl-sn-glycero-3-phosphocholine + CoA. The enzyme catalyses 1-(9Z-octadecenoyl)-sn-glycero-3-phosphocholine + (9Z)-octadecenoyl-CoA = 1,2-di-(9Z-octadecenoyl)-sn-glycero-3-phosphocholine + CoA. It carries out the reaction 1-(9Z-octadecenoyl)-sn-glycero-3-phosphocholine + (9Z,12Z)-octadecadienoyl-CoA = 1-(9Z)-octadecenoyl-2-(9Z,12Z)-octadecadienoyl-sn-glycero-3-phosphocholine + CoA. The catalysed reaction is (9Z,12Z,15Z)-octadecatrienoyl-CoA + 1-(9Z-octadecenoyl)-sn-glycero-3-phosphocholine = 1-(9Z-octadecaenoyl)-2-(9Z,12Z,15Z-octadecatrienoyl)-sn-glycero-3-phosphocholine + CoA. It catalyses the reaction a 1-acyl-sn-glycero-3-phosphoethanolamine + an acyl-CoA = a 1,2-diacyl-sn-glycero-3-phosphoethanolamine + CoA. The enzyme catalyses a 1-acyl-sn-glycero-3-phospho-L-serine + an acyl-CoA = a 1,2-diacyl-sn-glycero-3-phospho-L-serine + CoA. Functionally, lysophospholipid acyltransferase with broad specificity. Mediates the conversion of lysophosphatidylethanolamine (1-acyl-sn-glycero-3-phosphoethanolamine or LPE) into phosphatidylethanolamine (1,2-diacyl-sn-glycero-3-phosphoethanolamine or PE) (LPEAT activity). Catalyzes the acylation of lysophosphatidylserine (1-acyl-2-hydroxy-sn-glycero-3-phospho-L-serine or LPS) into phosphatidylserine (1,2-diacyl-sn-glycero-3-phospho-L-serine or PS) (LPSAT activity). Can convert lysophosphatidylcholine (1-acyl-sn-glycero-3-phosphocholine or LPC) into phosphatidylcholine (1,2-diacyl-sn-glycero-3-phosphocholine or PC) (LPCAT activity). Exhibits preference for C18-unsaturated acyl-CoA when transferring an acyl group to lysophosphatidylcholine. Can also utilize lysophosphatidylglycerol (LPG) as substrate in vitro. Has neither activity towards lysophosphatidic acid (LPA) nor lysophosphatidylinositol (LPI). Lysophospholipid acyltransferases catalyze the reacylation step of the phospholipid remodeling pathway also known as the Lands cycle. The primary function of the Lands cycle is to provide a route for acyl remodeling to modify fatty acid (FA) composition of phospholipids derived from the Kennedy pathway. Is involved in PC acyl editing and phosphocholine headgroup exchange between PC and diacylglycerols. This processes control the majority of acyl fluxes through PC to provide polyunsaturated fatty acids for triacylglycerols synthesis in seeds. Involved with LPCAT2 in the direct incorporation of newly synthesized fatty acids exported form the chloroplast into PC through acyl editing. In Arabidopsis thaliana (Mouse-ear cress), this protein is Lysophospholipid acyltransferase 1.